A 216-amino-acid chain; its full sequence is Uridine kinase (216 aa).

16–23 (GASASGKS) provides a ligand contact to ATP.

Belongs to the uridine kinase family.

The protein localises to the cytoplasm. It carries out the reaction uridine + ATP = UMP + ADP + H(+). The enzyme catalyses cytidine + ATP = CMP + ADP + H(+). It participates in pyrimidine metabolism; CTP biosynthesis via salvage pathway; CTP from cytidine: step 1/3. The protein operates within pyrimidine metabolism; UMP biosynthesis via salvage pathway; UMP from uridine: step 1/1. This is Uridine kinase from Pasteurella multocida (strain Pm70).